Consider the following 164-residue polypeptide: UPF0304 protein YPDSF_1971 (164 aa).

The protein belongs to the UPF0304 family.

In Yersinia pestis (strain Pestoides F), this protein is UPF0304 protein YPDSF_1971.